Reading from the N-terminus, the 158-residue chain is Large ribosomal subunit protein uL13 (158 aa).

A disordered region spans residues 129 to 158 (PEHGHHAQKPVALDFGAMNNKNGRGNNAGR). A compositionally biased stretch (low complexity) spans 144-158 (GAMNNKNGRGNNAGR).

This sequence belongs to the universal ribosomal protein uL13 family. Part of the 50S ribosomal subunit.

Its function is as follows. This protein is one of the early assembly proteins of the 50S ribosomal subunit, although it is not seen to bind rRNA by itself. It is important during the early stages of 50S assembly. The chain is Large ribosomal subunit protein uL13 from Anaplasma phagocytophilum (strain HZ).